Consider the following 384-residue polypeptide: Glucose-fructose oxidoreductase domain-containing protein 2 (384 aa).

Residues 1 to 25 form the signal peptide; it reads MKTLPGIGVFGTGNTARVLISLLRA. The disordered stretch occupies residues 358–384; sequence GEWESVELTNDETDSNQNLSEVIQHNL. Polar residues predominate over residues 372 to 384; that stretch reads SNQNLSEVIQHNL.

It belongs to the Gfo/Idh/MocA family.

It localises to the secreted. Its subcellular location is the extracellular space. The protein localises to the extracellular matrix. Functionally, promotes matrix assembly. This is Glucose-fructose oxidoreductase domain-containing protein 2 (gfod2) from Xenopus tropicalis (Western clawed frog).